Here is a 217-residue protein sequence, read N- to C-terminus: 2-phospho-L-lactate guanylyltransferase (217 aa).

The protein belongs to the CofC family. Homodimer.

It carries out the reaction (2S)-2-phospholactate + GTP + H(+) = (2S)-lactyl-2-diphospho-5'-guanosine + diphosphate. It functions in the pathway cofactor biosynthesis; coenzyme F420 biosynthesis. Guanylyltransferase that catalyzes the activation of (2S)-2-phospholactate (2-PL) as (2S)-lactyl-2-diphospho-5'-guanosine, via the condensation of 2-PL with GTP. It is involved in the biosynthesis of coenzyme F420, a hydride carrier cofactor. This is 2-phospho-L-lactate guanylyltransferase from Methanospirillum hungatei JF-1 (strain ATCC 27890 / DSM 864 / NBRC 100397 / JF-1).